A 247-amino-acid chain; its full sequence is V-type proton ATPase subunit D (247 aa).

The protein belongs to the V-ATPase D subunit family. As to quaternary structure, V-ATPase is a heteromultimeric enzyme made up of two complexes: the ATP-hydrolytic V1 complex and the proton translocation V0 complex. The V1 complex consists of three catalytic AB heterodimers that form a heterohexamer, three peripheral stalks each consisting of EG heterodimers, one central rotor including subunits D and F, and the regulatory subunits C and H. The proton translocation complex V0 consists of the proton transport subunit a, a ring of proteolipid subunits c9c'', rotary subunit d, subunits e and f, and the accessory subunits ATP6AP1/Ac45 and ATP6AP2/PRR. Interacts with SNX10.

Its subcellular location is the membrane. It is found in the cytoplasmic vesicle. It localises to the clathrin-coated vesicle membrane. The protein localises to the cytoplasm. The protein resides in the cytoskeleton. Its subcellular location is the microtubule organizing center. It is found in the centrosome. It localises to the cell projection. The protein localises to the cilium. Its function is as follows. Subunit of the V1 complex of vacuolar(H+)-ATPase (V-ATPase), a multisubunit enzyme composed of a peripheral complex (V1) that hydrolyzes ATP and a membrane integral complex (V0) that translocates protons. V-ATPase is responsible for acidifying and maintaining the pH of intracellular compartments and in some cell types, is targeted to the plasma membrane, where it is responsible for acidifying the extracellular environment. May play a role in cilium biogenesis through regulation of the transport and the localization of proteins to the cilium. The chain is V-type proton ATPase subunit D (ATP6V1D) from Oryctolagus cuniculus (Rabbit).